Here is a 479-residue protein sequence, read N- to C-terminus: Anaerobic nitric oxide reductase flavorubredoxin (479 aa).

Positions 30–210 (LRGSSYNSYL…PFSRLVTPKI (181 aa)) are zinc metallo-hydrolase. The Fe cation site is built by histidine 79, glutamate 81, aspartate 83, histidine 147, aspartate 166, and histidine 227. Residues 254–393 (ITIFYDTMSN…LCRQHGRDIA (140 aa)) form the Flavodoxin-like domain. FMN-binding positions include 260–264 (TMSNN) and 342–369 (AFGS…EMSL). Residues 423-474 (GPKMQCSVCQWIYDPALGEPLQDVAPGTPWSDVPDNFLCPECSLGKDVFDVL) form the Rubredoxin-like domain. Cysteine 428, cysteine 431, cysteine 461, and cysteine 464 together coordinate Fe cation.

It in the N-terminal section; belongs to the zinc metallo-hydrolase group 3 family. As to quaternary structure, homotetramer. Fe cation is required as a cofactor. Requires FMN as cofactor.

The protein resides in the cytoplasm. Its pathway is nitrogen metabolism; nitric oxide reduction. Its function is as follows. Anaerobic nitric oxide reductase; uses NADH to detoxify nitric oxide (NO), protecting several 4Fe-4S NO-sensitive enzymes. Has at least 2 reductase partners, only one of which (NorW, flavorubredoxin reductase) has been identified. NO probably binds to the di-iron center; electrons enter from the NorW at rubredoxin and are transferred sequentially to the FMN center and the di-iron center. Also able to function as an aerobic oxygen reductase. In Salmonella paratyphi B (strain ATCC BAA-1250 / SPB7), this protein is Anaerobic nitric oxide reductase flavorubredoxin.